The sequence spans 81 residues: Cytotoxin 1c (81 aa).

The signal sequence occupies residues 1 to 21 (MKTLLLTLVVVTIVCLDLGYT). Intrachain disulfides connect cysteine 24/cysteine 42, cysteine 35/cysteine 59, cysteine 63/cysteine 74, and cysteine 75/cysteine 80.

It belongs to the three-finger toxin family. Short-chain subfamily. Type IA cytotoxin sub-subfamily. Monomer in solution; Homodimer and oligomer in the presence of negatively charged lipids forming a pore with a size ranging between 20 and 30 Angstroms. Expressed by the venom gland.

It localises to the secreted. The protein resides in the target cell membrane. In terms of biological role, shows cytolytic activity on many different cells by forming pore in lipid membranes. In vivo, increases heart rate or kills the animal by cardiac arrest. In addition, it binds to heparin with high affinity, interacts with Kv channel-interacting protein 1 (KCNIP1) in a calcium-independent manner, and binds to integrin alpha-V/beta-3 (ITGAV/ITGB3) with moderate affinity. This is Cytotoxin 1c from Naja atra (Chinese cobra).